The primary structure comprises 312 residues: RNA pseudouridylate synthase domain-containing protein 1 (312 aa).

Methionine 1 carries the N-acetylmethionine modification. Aspartate 67 is an active-site residue. A disordered region spans residues 256–298 (ATPDPDPEDRGPRPGSPSALLPGPGRPPPPPTKPPETEAQRGP). Positions 279 to 289 (PGRPPPPPTKP) are enriched in pro residues.

This sequence belongs to the pseudouridine synthase RluA family.

The sequence is that of RNA pseudouridylate synthase domain-containing protein 1 (RPUSD1) from Homo sapiens (Human).